Reading from the N-terminus, the 58-residue chain is Keratin-associated protein 19-6 (58 aa).

It belongs to the KRTAP type 19 family. In terms of assembly, interacts with hair keratins.

In the hair cortex, hair keratin intermediate filaments are embedded in an interfilamentous matrix, consisting of hair keratin-associated proteins (KRTAP), which are essential for the formation of a rigid and resistant hair shaft through their extensive disulfide bond cross-linking with abundant cysteine residues of hair keratins. The matrix proteins include the high-sulfur and high-glycine-tyrosine keratins. The polypeptide is Keratin-associated protein 19-6 (KRTAP19-6) (Homo sapiens (Human)).